A 170-amino-acid chain; its full sequence is Adenine phosphoribosyltransferase (170 aa).

The protein belongs to the purine/pyrimidine phosphoribosyltransferase family. Homodimer.

The protein localises to the cytoplasm. It carries out the reaction AMP + diphosphate = 5-phospho-alpha-D-ribose 1-diphosphate + adenine. It functions in the pathway purine metabolism; AMP biosynthesis via salvage pathway; AMP from adenine: step 1/1. Catalyzes a salvage reaction resulting in the formation of AMP, that is energically less costly than de novo synthesis. The protein is Adenine phosphoribosyltransferase of Streptococcus pneumoniae (strain Hungary19A-6).